The following is a 73-amino-acid chain: Signaling peptide TAXIMIN 2 (73 aa).

The signal sequence occupies residues 1–27; sequence MGDCRPLGFLIGLPFALVALVLALVGA.

In terms of tissue distribution, confined to the vasculature of various organs, including seedling roots, leaves, cotyledons, sepals and petals. Also accumulates in root hair cells.

It localises to the secreted. In terms of biological role, signaling peptide involved in the regulation of lateral organs separation. This chain is Signaling peptide TAXIMIN 2, found in Arabidopsis thaliana (Mouse-ear cress).